The sequence spans 211 residues: Chaperone protein TorD (211 aa).

The protein belongs to the TorD/DmsD family. TorD subfamily.

The protein resides in the cytoplasm. Involved in the biogenesis of TorA. Acts on TorA before the insertion of the molybdenum cofactor and, as a result, probably favors a conformation of the apoenzyme that is competent for acquiring the cofactor. This chain is Chaperone protein TorD, found in Shewanella loihica (strain ATCC BAA-1088 / PV-4).